A 54-amino-acid chain; its full sequence is Photoreceptor disk component PRCD (54 aa).

C2 carries S-palmitoyl cysteine lipidation. The disordered stretch occupies residues 24–54 (QPEPNGVDGAVSGSSLETDLQSSGREKEPLK). The span at 35-46 (SGSSLETDLQSS) shows a compositional bias: polar residues.

This sequence belongs to the PRCD family. As to quaternary structure, interacts with RHO/rhodopsin; the interaction promotes PRCD stability. Post-translationally, palmitoylated at Cys-2. Palmitoylation is essential for protein stability and trafficking to the photoreceptor outer segment, but does not appear to be essential for membrane localization. Probably palmitoylated by ZDHHC3. In terms of processing, phosphorylated. Expressed in retina (at protein level).

It is found in the cell projection. It localises to the cilium. The protein localises to the photoreceptor outer segment. Its subcellular location is the membrane. The protein resides in the endoplasmic reticulum. It is found in the golgi apparatus. In terms of biological role, involved in vision. The sequence is that of Photoreceptor disk component PRCD from Bos taurus (Bovine).